The sequence spans 434 residues: D-amino acid dehydrogenase (434 aa).

3–17 serves as a coordination point for FAD; the sequence is VVILGSGVVGVASAW.

Belongs to the DadA oxidoreductase family. It depends on FAD as a cofactor.

It catalyses the reaction a D-alpha-amino acid + A + H2O = a 2-oxocarboxylate + AH2 + NH4(+). It participates in amino-acid degradation; D-alanine degradation; NH(3) and pyruvate from D-alanine: step 1/1. Its function is as follows. Oxidative deamination of D-amino acids. The polypeptide is D-amino acid dehydrogenase (Serratia proteamaculans (strain 568)).